A 430-amino-acid polypeptide reads, in one-letter code: Enolase (430 aa).

Residue Gln-167 coordinates (2R)-2-phosphoglycerate. Catalysis depends on Glu-209, which acts as the Proton donor. 3 residues coordinate Mg(2+): Asp-246, Glu-287, and Asp-314. Positions 339, 368, and 369 each coordinate (2R)-2-phosphoglycerate. Catalysis depends on Lys-339, which acts as the Proton acceptor.

It belongs to the enolase family. The cofactor is Mg(2+).

It localises to the cytoplasm. The protein localises to the secreted. Its subcellular location is the cell surface. It catalyses the reaction (2R)-2-phosphoglycerate = phosphoenolpyruvate + H2O. Its pathway is carbohydrate degradation; glycolysis; pyruvate from D-glyceraldehyde 3-phosphate: step 4/5. In terms of biological role, catalyzes the reversible conversion of 2-phosphoglycerate (2-PG) into phosphoenolpyruvate (PEP). It is essential for the degradation of carbohydrates via glycolysis. In Synechococcus sp. (strain ATCC 27144 / PCC 6301 / SAUG 1402/1) (Anacystis nidulans), this protein is Enolase.